Here is a 467-residue protein sequence, read N- to C-terminus: Acyl-lipid (8-3)-desaturase B (467 aa).

The 78-residue stretch at 12-89 folds into the Cytochrome b5 heme-binding domain; it reads LKLYTWDEVS…IKQYEIGYIS (78 aa). Residues His47 and His70 each coordinate heme. 2 helical membrane passes run 123–143 and 152–172; these read VSVG…VTYY and FWLN…FGLH. The Histidine box-1 signature appears at 175 to 179; sequence HDACH. A helical membrane pass occupies residues 187-207; sequence MTWKILGATFDLFAGASFYAW. The short motif at 211–216 is the Histidine box-2 element; that stretch reads HVIGHH. A run of 2 helical transmembrane segments spans residues 293 to 313 and 317 to 337; these read AIFI…PLIY and FSHL…YLAI. The short motif at 400–404 is the Histidine box-3 element; it reads QVIHH.

This sequence belongs to the fatty acid desaturase type 1 family. Fe(2+) serves as cofactor.

The protein resides in the membrane. It carries out the reaction an (8Z,11Z,14Z)-icosatrienoyl-containing glycerolipid + 2 Fe(II)-[cytochrome b5] + O2 + 2 H(+) = (5Z,8Z,11Z,14Z)-eicosatetraenoyl-containing glycerolipid + 2 Fe(III)-[cytochrome b5] + 2 H2O. The catalysed reaction is an (8Z,11Z,14Z,17Z)-eicosatetraenoyl-containing glycerolipid + 2 Fe(II)-[cytochrome b5] + O2 + 2 H(+) = a (5Z,8Z,11Z,14Z,17Z)-eicosapentaenoyl-containing glycerolipid + 2 Fe(III)-[cytochrome b5] + 2 H2O. In terms of biological role, fatty acid desaturase that introduces a cis double bond at the 5-position in 18-carbon polyunsaturated fatty acids. This Dictyostelium discoideum (Social amoeba) protein is Acyl-lipid (8-3)-desaturase B (fadB).